The chain runs to 564 residues: NAD-dependent malic enzyme (564 aa).

Tyr104 functions as the Proton donor in the catalytic mechanism. NAD(+) is bound at residue Arg157. The active-site Proton acceptor is the Lys175. Glu246, Asp247, and Asp270 together coordinate a divalent metal cation. 2 residues coordinate NAD(+): Asp270 and Asn417.

Belongs to the malic enzymes family. Homotetramer. Requires Mg(2+) as cofactor. The cofactor is Mn(2+).

It carries out the reaction (S)-malate + NAD(+) = pyruvate + CO2 + NADH. It catalyses the reaction oxaloacetate + H(+) = pyruvate + CO2. The polypeptide is NAD-dependent malic enzyme (Aeromonas hydrophila subsp. hydrophila (strain ATCC 7966 / DSM 30187 / BCRC 13018 / CCUG 14551 / JCM 1027 / KCTC 2358 / NCIMB 9240 / NCTC 8049)).